Consider the following 187-residue polypeptide: Pyridoxal 5'-phosphate synthase subunit PdxT (187 aa).

Position 47–49 (47–49 (GES)) interacts with L-glutamine. Cys76 serves as the catalytic Nucleophile. Residues Arg102 and 128-129 (IR) each bind L-glutamine. Catalysis depends on charge relay system residues His165 and Glu167.

This sequence belongs to the glutaminase PdxT/SNO family. In terms of assembly, in the presence of PdxS, forms a dodecamer of heterodimers. Only shows activity in the heterodimer.

It carries out the reaction aldehydo-D-ribose 5-phosphate + D-glyceraldehyde 3-phosphate + L-glutamine = pyridoxal 5'-phosphate + L-glutamate + phosphate + 3 H2O + H(+). The enzyme catalyses L-glutamine + H2O = L-glutamate + NH4(+). The protein operates within cofactor biosynthesis; pyridoxal 5'-phosphate biosynthesis. Functionally, catalyzes the hydrolysis of glutamine to glutamate and ammonia as part of the biosynthesis of pyridoxal 5'-phosphate. The resulting ammonia molecule is channeled to the active site of PdxS. This chain is Pyridoxal 5'-phosphate synthase subunit PdxT, found in Methanococcus vannielii (strain ATCC 35089 / DSM 1224 / JCM 13029 / OCM 148 / SB).